Reading from the N-terminus, the 426-residue chain is Protein CgeD (426 aa).

To B.subtilis spore coat polysaccharide biosynthesis protein SpsA.

In terms of biological role, may be involved in maturation of the outermost layer of the spore. The sequence is that of Protein CgeD (cgeD) from Bacillus subtilis (strain 168).